Consider the following 382-residue polypeptide: Chaperone protein DnaJ (382 aa).

In terms of domain architecture, J spans 5-70; sequence DYYEVLGLQK…QKRAAYDQYG (66 aa). The CR-type zinc finger occupies 134-212; it reads GTTKDIQINT…CHGEGRVHKK (79 aa). Positions 147, 150, 164, 167, 186, 189, 200, and 203 each coordinate Zn(2+). 4 CXXCXGXG motif repeats span residues 147 to 154, 164 to 171, 186 to 193, and 200 to 207; these read CDSCGGSG, CPHCHGSG, CPTCHGSG, and CRNCHGEG.

Belongs to the DnaJ family. As to quaternary structure, homodimer. Zn(2+) serves as cofactor.

The protein resides in the cytoplasm. Its function is as follows. Participates actively in the response to hyperosmotic and heat shock by preventing the aggregation of stress-denatured proteins and by disaggregating proteins, also in an autonomous, DnaK-independent fashion. Unfolded proteins bind initially to DnaJ; upon interaction with the DnaJ-bound protein, DnaK hydrolyzes its bound ATP, resulting in the formation of a stable complex. GrpE releases ADP from DnaK; ATP binding to DnaK triggers the release of the substrate protein, thus completing the reaction cycle. Several rounds of ATP-dependent interactions between DnaJ, DnaK and GrpE are required for fully efficient folding. Also involved, together with DnaK and GrpE, in the DNA replication of plasmids through activation of initiation proteins. The protein is Chaperone protein DnaJ of Haemophilus influenzae (strain ATCC 51907 / DSM 11121 / KW20 / Rd).